Consider the following 100-residue polypeptide: Small ribosomal subunit protein uS14 (100 aa).

It belongs to the universal ribosomal protein uS14 family. Part of the 30S ribosomal subunit. Contacts proteins S3 and S10.

Binds 16S rRNA, required for the assembly of 30S particles and may also be responsible for determining the conformation of the 16S rRNA at the A site. The polypeptide is Small ribosomal subunit protein uS14 (Microcystis aeruginosa (strain NIES-843 / IAM M-2473)).